The primary structure comprises 264 residues: Putative hydro-lyase Psyr_0498 (264 aa).

Belongs to the D-glutamate cyclase family.

The chain is Putative hydro-lyase Psyr_0498 from Pseudomonas syringae pv. syringae (strain B728a).